The sequence spans 469 residues: Carboxypeptidase Q (469 aa).

Residues 1–19 (MKTLILTLLSLYELQLCCG) form the signal peptide. A propeptide spanning residues 20-42 (AYNQNIRSQRKFEMIKTEISSYK) is cleaved from the precursor. 2 N-linked (GlcNAc...) asparagine glycosylation sites follow: Asn59 and Asn159. Zn(2+) is bound by residues His288 and Asp300. Residue Glu334 is the Nucleophile of the active site. Glu335 contributes to the Zn(2+) binding site. N-linked (GlcNAc...) asparagine glycosylation is present at Asn351. Asp362 serves as a coordination point for Zn(2+). Residue Asn394 is glycosylated (N-linked (GlcNAc...) asparagine). Zn(2+) is bound at residue His432.

The protein belongs to the peptidase M28 family. In terms of assembly, homodimer. The monomeric form is inactive while the homodimer is active.

The protein localises to the endoplasmic reticulum. It localises to the golgi apparatus. Its subcellular location is the lysosome. It is found in the secreted. Functionally, carboxypeptidase that may play an important role in the hydrolysis of circulating peptides. Catalyzes more efficiently the hydrolysis of dipeptides with unsubstituted terminals into amino acids. The polypeptide is Carboxypeptidase Q (cpq) (Xenopus laevis (African clawed frog)).